We begin with the raw amino-acid sequence, 303 residues long: Aspartate carbamoyltransferase catalytic subunit (303 aa).

The carbamoyl phosphate site is built by R54 and T55. K82 contributes to the L-aspartate binding site. R104, H132, and Q135 together coordinate carbamoyl phosphate. Positions 165 and 221 each coordinate L-aspartate. The carbamoyl phosphate site is built by G261 and P262.

It belongs to the aspartate/ornithine carbamoyltransferase superfamily. ATCase family. In terms of assembly, heterododecamer (2C3:3R2) of six catalytic PyrB chains organized as two trimers (C3), and six regulatory PyrI chains organized as three dimers (R2).

The catalysed reaction is carbamoyl phosphate + L-aspartate = N-carbamoyl-L-aspartate + phosphate + H(+). Its pathway is pyrimidine metabolism; UMP biosynthesis via de novo pathway; (S)-dihydroorotate from bicarbonate: step 2/3. Catalyzes the condensation of carbamoyl phosphate and aspartate to form carbamoyl aspartate and inorganic phosphate, the committed step in the de novo pyrimidine nucleotide biosynthesis pathway. The polypeptide is Aspartate carbamoyltransferase catalytic subunit (Koribacter versatilis (strain Ellin345)).